The chain runs to 542 residues: Chaperonin GroEL 1 (542 aa).

ATP-binding positions include 30–33 (TLGP), K51, 87–91 (DGTTT), G415, 480–482 (NAA), and D496.

It belongs to the chaperonin (HSP60) family. As to quaternary structure, forms a cylinder of 14 subunits composed of two heptameric rings stacked back-to-back. Interacts with the co-chaperonin GroES.

Its subcellular location is the cytoplasm. The enzyme catalyses ATP + H2O + a folded polypeptide = ADP + phosphate + an unfolded polypeptide.. Together with its co-chaperonin GroES, plays an essential role in assisting protein folding. The GroEL-GroES system forms a nano-cage that allows encapsulation of the non-native substrate proteins and provides a physical environment optimized to promote and accelerate protein folding. This is Chaperonin GroEL 1 from Nitrobacter winogradskyi (strain ATCC 25391 / DSM 10237 / CIP 104748 / NCIMB 11846 / Nb-255).